A 91-amino-acid chain; its full sequence is Lactococcin-B immunity protein (91 aa).

Its function is as follows. Imparts immunity to lactococcin-B to naturally sensitive host strains. The polypeptide is Lactococcin-B immunity protein (lciB) (Lactococcus lactis subsp. cremoris (Streptococcus cremoris)).